Consider the following 273-residue polypeptide: 2,3,4,5-tetrahydropyridine-2,6-dicarboxylate N-succinyltransferase (273 aa).

Positions 104 and 141 each coordinate substrate.

Belongs to the transferase hexapeptide repeat family. In terms of assembly, homotrimer.

The protein localises to the cytoplasm. It carries out the reaction (S)-2,3,4,5-tetrahydrodipicolinate + succinyl-CoA + H2O = (S)-2-succinylamino-6-oxoheptanedioate + CoA. It functions in the pathway amino-acid biosynthesis; L-lysine biosynthesis via DAP pathway; LL-2,6-diaminopimelate from (S)-tetrahydrodipicolinate (succinylase route): step 1/3. The polypeptide is 2,3,4,5-tetrahydropyridine-2,6-dicarboxylate N-succinyltransferase (Nitrosomonas europaea (strain ATCC 19718 / CIP 103999 / KCTC 2705 / NBRC 14298)).